The chain runs to 515 residues: Ent-isokaurene C2/C3-hydroxylase (515 aa).

A helical membrane pass occupies residues 5–25 (LILDLCLSALFVVVLSKLVSS). Residue cysteine 452 coordinates heme.

Belongs to the cytochrome P450 family. Heme serves as cofactor.

The protein localises to the membrane. The catalysed reaction is ent-isokaurene + 2 reduced [NADPH--hemoprotein reductase] + 2 O2 = ent-isokaurene-2beta,3beta-diol + 2 oxidized [NADPH--hemoprotein reductase] + 2 H2O + 2 H(+). Its function is as follows. Enzyme of the diterpenoid metabolism involved in the biosynthesis of antibacterial oryzalides such as phytocassane. In Oryza sativa subsp. japonica (Rice), this protein is Ent-isokaurene C2/C3-hydroxylase (CYP71Z6).